We begin with the raw amino-acid sequence, 712 residues long: Elongation factor G (712 aa).

A tr-type G domain is found at 8–290 (TRYRNIGISA…AVIEFLPSPT (283 aa)). Residues 17 to 24 (AHIDAGKT), 88 to 92 (DTPGH), and 142 to 145 (NKMD) contribute to the GTP site.

Belongs to the TRAFAC class translation factor GTPase superfamily. Classic translation factor GTPase family. EF-G/EF-2 subfamily.

The protein resides in the cytoplasm. Catalyzes the GTP-dependent ribosomal translocation step during translation elongation. During this step, the ribosome changes from the pre-translocational (PRE) to the post-translocational (POST) state as the newly formed A-site-bound peptidyl-tRNA and P-site-bound deacylated tRNA move to the P and E sites, respectively. Catalyzes the coordinated movement of the two tRNA molecules, the mRNA and conformational changes in the ribosome. This is Elongation factor G from Acinetobacter baumannii (strain AB307-0294).